We begin with the raw amino-acid sequence, 335 residues long: Urokinase plasminogen activator surface receptor (335 aa).

An N-terminal signal peptide occupies residues 1-22; sequence MGHPLLLPLLLLLHTCVPASWG. 3 UPAR/Ly6 domains span residues 23 to 114, 115 to 213, and 214 to 305; these read LRCM…RSRY, LECI…PQNG, and HQCY…YRKG. 3 disulfide bridges follow: cysteine 25-cysteine 46, cysteine 28-cysteine 34, and cysteine 39-cysteine 67. N-linked (GlcNAc...) asparagine glycosylation is present at asparagine 74. 11 disulfides stabilise this stretch: cysteine 93–cysteine 98, cysteine 117–cysteine 144, cysteine 120–cysteine 127, cysteine 137–cysteine 169, cysteine 175–cysteine 192, cysteine 193–cysteine 198, cysteine 216–cysteine 244, cysteine 219–cysteine 227, cysteine 237–cysteine 263, cysteine 269–cysteine 287, and cysteine 288–cysteine 293. Asparagine 184, asparagine 194, asparagine 222, asparagine 255, and asparagine 284 each carry an N-linked (GlcNAc...) asparagine glycan. Residue glycine 305 is the site of GPI-anchor amidated glycine attachment. Positions 306–335 are cleaved as a propeptide — removed in mature form; that stretch reads AAPQPGPAHLSLTITLLMTARLWGGTLLWT.

In terms of assembly, monomer. Interacts (via the UPAR/Ly6 domains) with SRPX2. Interacts with MRC2. Interacts with FAP (seprase); the interaction occurs at the cell surface of invadopodia membrane. Interacts with SORL1 (via N-terminal ectodomain); this interaction decreases PLAUR internalization. The ternary complex composed of PLAUR-PLAU-SERPINE1 also interacts with SORL1.

The protein resides in the cell membrane. The protein localises to the cell projection. Its subcellular location is the invadopodium membrane. In terms of biological role, acts as a receptor for urokinase plasminogen activator. Plays a role in localizing and promoting plasmin formation. Mediates the proteolysis-independent signal transduction activation effects of U-PA. It is subject to negative-feedback regulation by U-PA which cleaves it into an inactive form. This is Urokinase plasminogen activator surface receptor (PLAUR) from Macaca fascicularis (Crab-eating macaque).